The primary structure comprises 265 residues: Synaptoporin (265 aa).

Residues 1–4 (MCMV) are Cytoplasmic-facing. The 202-residue stretch at 1 to 202 (MCMVIFAPLF…NIWFVFKETG (202 aa)) folds into the MARVEL domain. A helical membrane pass occupies residues 5 to 25 (IFAPLFAIFAFATCGGYSGGL). The Vesicular portion of the chain corresponds to 26–81 (RLSVDCVNKTESNLSIDIAFAYPFRLHQVTFEVPTCEGKERQKLALVGDSSSSAEF). N33 and N38 each carry an N-linked (GlcNAc...) asparagine glycan. A helical membrane pass occupies residues 82 to 102 (FVTVAVFAFLYSLAATVVYIF). Residues 103-114 (FQNKYRENNRGP) lie on the Cytoplasmic side of the membrane. The chain crosses the membrane as a helical span at residues 115 to 135 (LIDFIVTVVFSFLWLVGSSAW). Topologically, residues 136–177 (AKGLSDVKVATDPKEVLLLMSACKQPSNKCMAVHSPVMSSLN) are vesicular. Residue N177 is glycosylated (N-linked (GlcNAc...) asparagine). A helical membrane pass occupies residues 178-198 (TSVVFGFLNFILWAGNIWFVF). Topologically, residues 199 to 265 (KETGWHSSGQ…SGPTSFNNQI (67 aa)) are cytoplasmic. Residues 210–214 (YLSDP) form repeat 1. The segment at 210–242 (YLSDPMEKHSSSYNQGGYNQDSYGSSGGYSQQA) is 5 X approximate repeats. 2 positions are modified to phosphoserine: S212 and S220. The interval 221–265 (SYNQGGYNQDSYGSSGGYSQQASLGPTSDEFGQQPSGPTSFNNQI) is disordered. 4 consecutive repeat copies span residues 222–226 (YNQGG), 227–231 (YNQDS), 232–236 (YGSSG), and 238–242 (YSQQA). The span at 224–243 (QGGYNQDSYGSSGGYSQQAS) shows a compositional bias: low complexity. A compositionally biased stretch (polar residues) spans 244-265 (LGPTSDEFGQQPSGPTSFNNQI).

This sequence belongs to the synaptophysin/synaptobrevin family. In terms of tissue distribution, central nervous system.

The protein localises to the cytoplasmic vesicle. The protein resides in the secretory vesicle. It localises to the synaptic vesicle membrane. Its subcellular location is the synapse. It is found in the synaptosome. In terms of biological role, intrinsic membrane protein of small synaptic vesicles. Probable vesicular channel protein. The polypeptide is Synaptoporin (Synpr) (Rattus norvegicus (Rat)).